We begin with the raw amino-acid sequence, 468 residues long: Mothers against decapentaplegic homolog 2 (468 aa).

The MH1 domain occupies P10–P177. C75, C150, C162, and H167 together coordinate Zn(2+). Residues P224–T254 are disordered. The segment covering S234–T244 has biased composition (polar residues). One can recognise an MH2 domain in the interval W275–S468.

Belongs to the dwarfin/SMAD family.

It localises to the cytoplasm. Its subcellular location is the nucleus. Its function is as follows. Promotes differentiation of dorsal tissues. May be involved in the mediation of Ndr2 signaling during mesoderm and axis formation during embryogenesis. The sequence is that of Mothers against decapentaplegic homolog 2 (smad2) from Danio rerio (Zebrafish).